Consider the following 436-residue polypeptide: Phosphoribosylamine--glycine ligase (436 aa).

Residues 106-318 (RKLFEDYRIP…MLEICEGIVD (213 aa)) enclose the ATP-grasp domain. 133–196 (MEDFDSEAVV…EERVVGEEFT (64 aa)) is a binding site for ATP. 3 residues coordinate Mg(2+): Q276, E288, and N290. Q276, E288, and N290 together coordinate Mn(2+).

The protein belongs to the GARS family. Requires Mg(2+) as cofactor. The cofactor is Mn(2+).

The enzyme catalyses 5-phospho-beta-D-ribosylamine + glycine + ATP = N(1)-(5-phospho-beta-D-ribosyl)glycinamide + ADP + phosphate + H(+). Its pathway is purine metabolism; IMP biosynthesis via de novo pathway; N(1)-(5-phospho-D-ribosyl)glycinamide from 5-phospho-alpha-D-ribose 1-diphosphate: step 2/2. This Methanothermobacter thermautotrophicus (strain ATCC 29096 / DSM 1053 / JCM 10044 / NBRC 100330 / Delta H) (Methanobacterium thermoautotrophicum) protein is Phosphoribosylamine--glycine ligase.